We begin with the raw amino-acid sequence, 300 residues long: Ribonuclease HIII (300 aa).

One can recognise an RNase H type-2 domain in the interval 86 to 300 (RPRLGVDESG…FNEICDSASA (215 aa)). Aspartate 92, glutamate 93, and aspartate 196 together coordinate a divalent metal cation.

This sequence belongs to the RNase HII family. RnhC subfamily. Requires Mn(2+) as cofactor. It depends on Mg(2+) as a cofactor.

It is found in the cytoplasm. The catalysed reaction is Endonucleolytic cleavage to 5'-phosphomonoester.. In terms of biological role, endonuclease that specifically degrades the RNA of RNA-DNA hybrids. In Chlamydia caviae (strain ATCC VR-813 / DSM 19441 / 03DC25 / GPIC) (Chlamydophila caviae), this protein is Ribonuclease HIII.